A 728-amino-acid polypeptide reads, in one-letter code: Ubiquitin carboxyl-terminal hydrolase BAP1 (728 aa).

Residues 4–235 (GWLELESDPG…IRFNLMAVVP (232 aa)) enclose the UCH catalytic domain. Residues 56 to 60 (RRSRR) carry the Arg-finger motif motif. Catalysis depends on cysteine 91, which acts as the Nucleophile. The active-site Proton donor is the histidine 169. The disordered stretch occupies residues 273–333 (THKSQESQLP…TTHSPPSKCK (61 aa)). Position 292 is a phosphoserine (serine 292). Residues 363–366 (NHNY) carry the HBM-like motif motif. Serine 369 and serine 395 each carry phosphoserine. Disordered stretches follow at residues 372–436 (QEEE…DGQL) and 463–523 (SIKT…SPVT). Acidic residues predominate over residues 395-408 (SEDEDDYEDEDEDV). 2 stretches are compositionally biased toward polar residues: residues 427–436 (SLSNSSDGQL) and 479–523 (THSQ…SPVT). Threonine 492 is subject to Phosphothreonine. Phosphoserine occurs at positions 520, 536, and 584. The disordered stretch occupies residues 574 to 623 (LTEGGKGSSPSTRSSQGSQGSSGLEEKEVVEVTESRDKPGLNRSSEPLSG). A compositionally biased stretch (low complexity) spans 581-596 (SSPSTRSSQGSQGSSG). The interaction with BRCA1 stretch occupies residues 595 to 720 (SGLEEKEVVE…QRKPDRRKRS (126 aa)). Residues 597–613 (LEEKEVVEVTESRDKPG) show a composition bias toward basic and acidic residues. The stretch at 629-660 (KELLALLKCVEAEIANYEACLKEEVEKRKKFK) forms a coiled coil. Residues 641–685 (EIANYEACLKEEVEKRKKFKIDDQRRTHNYDEFICTFISMLAQEG) are interaction with YY1. A ULD domain is found at 669–697 (NYDEFICTFISMLAQEGMLANLVEQNISV). The tract at residues 698–700 (RRR) is interaction with nucleosomal DNA forming a DNA clamp with ASXL1. The Classical bipartite Nuclear localization signal (NLS) signature appears at 698–721 (RRRQGVSIGRLHKQRKPDRRKRSR). The interval 702–728 (GVSIGRLHKQRKPDRRKRSRPYKAKRQ) is disordered. The tract at residues 712-728 (RKPDRRKRSRPYKAKRQ) is positively charged C-terminal extension (CTE). A Nuclear localization signal motif is present at residues 716–721 (RRKRSR). The short motif at 716 to 723 (RRKRSRPY) is the Non-classical PY-nuclear localization signal (PY-NLS) element.

The protein belongs to the peptidase C12 family. BAP1 subfamily. Core component of the polycomb repressive deubiquitinase (PR-DUB) complex, at least composed of BAP1, one of ASXL1, ASXL2 or (probably) ASXL3, and one of MBD5 or MBD6. The PR-DUB core associates with a number of accessory proteins, including FOXK1, FOXK2, KDM1B, HCFC1, YY1 and OGT; KDM1B specifically associates with ASXL2 PR-DUB complexes. The BAP1 deubiquitinase activity is not required for PR-DUB assembly. Homodimerizes (via coiled-coil hinge-region between the UCH and ULD domains) to mediate assembly of 2 copies of the BAP1-ASXL heterodimer into a bisymmetric tetramer; dimerization enhances association with nucleosomes. The PR-DUB complex associates with nucleosomes to mediate deubiquitination of 'lys-120' of histone H2AK118ub1 substrates; the association requires the positively charged C-terminal tail of BAP1. Interacts (via ULD domain) with ASXL1 (via DEUBAD domain); the interaction is direct and forms a ubiquitin binding cleft. The interaction with ASXL1 stabilizes BAP1 but is not required for nucleosome binding. Associates (via C-terminus) with nucleosome and chromatosome complexes through direct interaction with DNA and the histone3/4 dimer; this association displaces the histone-2A C-terminal tail, extending and orienting the H2AK118ub1 substrate towards the BAP1 deubiquitinase active site. Also interacts (via arginine finger) directly with the histone H2A-H2B acidic patch; this interaction is not critical for nucleosome-chromatosome association but may play a role in orienting the H2AK118ub1 substrate towards the PR-DUB complex active site. Interacts with BRCA1 (via the RING finger). Interacts (via HBM-like motif) with HCFC1. Interacts (via a C-terminal region overlapping the ULD domain) with YY1; the interaction is direct and requires the interaction with HCFC1. Interacts (when phosphorylated at Thr-492) with FOXK1. Interacts (when phosphorylated at Thr-492) with FOXK2; leading to recruitment of the PR-DUB complex and repression of FOXK2 target genes. Interacts (via non-classical PY-NLS) with TNPO1/transportin-1 (via HEAT repeats 8-12); the interaction is direct, mediates BAP1 nuclear localization and disrupts BAP1 homodimerization. Interacts (via C-terminus) with KPNA1/importin alpha5 and KPNA2/importin alpha1; these interactions can contribute to BAP1 nuclear localization but are less important than the interaction with TNPO1/transportin-1. The interaction with TNPO1/transportin-1 disrupts homodimerization and blocks ubiquitination by UBE2O. In terms of processing, ubiquitinated: monoubiquitinated at multiple sites within its nuclear localization signal (NLS) BY UBE2O, leading to cytoplasmic retention. Able to mediate autodeubiquitination via intramolecular interactions to counteract cytoplasmic retention. Monoubiquitinated on at least 4 sites near or within its PY-NLS. Highly expressed in mammary glands, testis and ovary. Up-regulated in mammary glands during puberty, pregnancy, and as a result of parity.

It is found in the cytoplasm. The protein resides in the nucleus. Its subcellular location is the chromosome. The enzyme catalyses Thiol-dependent hydrolysis of ester, thioester, amide, peptide and isopeptide bonds formed by the C-terminal Gly of ubiquitin (a 76-residue protein attached to proteins as an intracellular targeting signal).. Its function is as follows. Deubiquitinating enzyme that plays a key role in chromatin by mediating deubiquitination of histone H2A and HCFC1. Catalytic component of the polycomb repressive deubiquitinase (PR-DUB) complex, a complex that specifically mediates deubiquitination of histone H2A monoubiquitinated at 'Lys-120' (H2AK119ub1). Does not deubiquitinate monoubiquitinated histone H2B. The PR-DUB complex is an epigenetic regulator of gene expression and acts as a transcriptional coactivator, affecting genes involved in development, cell communication, signaling, cell proliferation and cell viability. Antagonizes PRC1 mediated H2AK119ub1 monoubiquitination. As part of the PR-DUB complex, associates with chromatin enriched in histone marks H3K4me1, H3K4me3, and H3K27Ac, but not in H3K27me3. Acts as a regulator of cell growth by mediating deubiquitination of HCFC1 N-terminal and C-terminal chains, with some specificity toward 'Lys-48'-linked polyubiquitin chains compared to 'Lys-63'-linked polyubiquitin chains. Deubiquitination of HCFC1 does not lead to increase stability of HCFC1. Interferes with the BRCA1 and BARD1 heterodimer activity by inhibiting their ability to mediate ubiquitination and autoubiquitination. It however does not mediate deubiquitination of BRCA1 and BARD1. Able to mediate autodeubiquitination via intramolecular interactions to counteract monoubiquitination at the nuclear localization signal (NLS), thereby protecting it from cytoplasmic sequestration. Negatively regulates epithelial-mesenchymal transition (EMT) of trophoblast stem cells during placental development by regulating genes involved in epithelial cell integrity, cell adhesion and cytoskeletal organization. The protein is Ubiquitin carboxyl-terminal hydrolase BAP1 (Bap1) of Mus musculus (Mouse).